We begin with the raw amino-acid sequence, 366 residues long: Histidinol-phosphate aminotransferase (366 aa).

Position 228 is an N6-(pyridoxal phosphate)lysine (Lys-228).

It belongs to the class-II pyridoxal-phosphate-dependent aminotransferase family. Histidinol-phosphate aminotransferase subfamily. Homodimer. Requires pyridoxal 5'-phosphate as cofactor.

The catalysed reaction is L-histidinol phosphate + 2-oxoglutarate = 3-(imidazol-4-yl)-2-oxopropyl phosphate + L-glutamate. Its pathway is amino-acid biosynthesis; L-histidine biosynthesis; L-histidine from 5-phospho-alpha-D-ribose 1-diphosphate: step 7/9. This chain is Histidinol-phosphate aminotransferase, found in Corynebacterium glutamicum (strain R).